A 131-amino-acid chain; its full sequence is Large-conductance mechanosensitive channel (131 aa).

2 helical membrane passes run 21–41 (VGVI…ADVI) and 76–96 (GMFI…FLMI).

This sequence belongs to the MscL family. As to quaternary structure, homopentamer.

It is found in the cell inner membrane. Channel that opens in response to stretch forces in the membrane lipid bilayer. May participate in the regulation of osmotic pressure changes within the cell. The chain is Large-conductance mechanosensitive channel from Histophilus somni (strain 129Pt) (Haemophilus somnus).